The following is a 475-amino-acid chain: UDP-glucosyltransferase 102 (475 aa).

Residues Ser278, 344–345 (WA), 362–370 (HCGWNSTLE), and 384–387 (YGEQ) each bind UDP-alpha-D-glucose.

It belongs to the UDP-glycosyltransferase family.

It functions in the pathway secondary metabolite biosynthesis; terpenoid biosynthesis. Probable component of the triterpene saponins (e.g. ginsenosides) biosynthetic pathway. No detectable activity toward protopanaxatriol (PPT). This is UDP-glucosyltransferase 102 (UGT102) from Panax ginseng (Korean ginseng).